The chain runs to 536 residues: Chaperonin GroEL (536 aa).

ATP contacts are provided by residues 29–32 (TLGP), 86–90 (DGTTT), Gly413, and Asp494.

This sequence belongs to the chaperonin (HSP60) family. As to quaternary structure, forms a cylinder of 14 subunits composed of two heptameric rings stacked back-to-back. Interacts with the co-chaperonin GroES.

It localises to the cytoplasm. The enzyme catalyses ATP + H2O + a folded polypeptide = ADP + phosphate + an unfolded polypeptide.. Together with its co-chaperonin GroES, plays an essential role in assisting protein folding. The GroEL-GroES system forms a nano-cage that allows encapsulation of the non-native substrate proteins and provides a physical environment optimized to promote and accelerate protein folding. In Acholeplasma laidlawii (strain PG-8A), this protein is Chaperonin GroEL.